The sequence spans 205 residues: Protein GrpE (205 aa).

Positions 1–18 (MSEEVKNSVETEENKASK) are enriched in basic and acidic residues. The tract at residues 1–60 (MSEEVKNSVETEENKASKDNATQAPNPTENHNTAQETEKAENSEKTESATQENESLDKLK) is disordered. The span at 19–35 (DNATQAPNPTENHNTAQ) shows a compositional bias: polar residues. Over residues 36–47 (ETEKAENSEKTE) the composition is skewed to basic and acidic residues.

It belongs to the GrpE family. As to quaternary structure, homodimer.

It localises to the cytoplasm. Its function is as follows. Participates actively in the response to hyperosmotic and heat shock by preventing the aggregation of stress-denatured proteins, in association with DnaK and GrpE. It is the nucleotide exchange factor for DnaK and may function as a thermosensor. Unfolded proteins bind initially to DnaJ; upon interaction with the DnaJ-bound protein, DnaK hydrolyzes its bound ATP, resulting in the formation of a stable complex. GrpE releases ADP from DnaK; ATP binding to DnaK triggers the release of the substrate protein, thus completing the reaction cycle. Several rounds of ATP-dependent interactions between DnaJ, DnaK and GrpE are required for fully efficient folding. This Chloroherpeton thalassium (strain ATCC 35110 / GB-78) protein is Protein GrpE.